The sequence spans 100 residues: MSKLFDSRLADVIRKPVITEKATNALDLNQYTFEVDHRAAKPQIKAAIEALFSVKVIGVNTMNPPRRTRRVGKFSGKRSQVKKAIVRLAEGDKIQLFPES.

The protein belongs to the universal ribosomal protein uL23 family. Part of the 50S ribosomal subunit. Contacts protein L29, and trigger factor when it is bound to the ribosome.

Functionally, one of the early assembly proteins it binds 23S rRNA. One of the proteins that surrounds the polypeptide exit tunnel on the outside of the ribosome. Forms the main docking site for trigger factor binding to the ribosome. The chain is Large ribosomal subunit protein uL23 from Prochlorococcus marinus (strain MIT 9312).